Reading from the N-terminus, the 424-residue chain is L-glutamine:2-deoxy-scyllo-inosose aminotransferase (424 aa).

Position 202 is an N6-(pyridoxal phosphate)lysine (lysine 202).

The protein belongs to the DegT/DnrJ/EryC1 family. L-glutamine:2-deoxy-scyllo-inosose/scyllo-inosose aminotransferase subfamily. It depends on pyridoxal 5'-phosphate as a cofactor.

The catalysed reaction is 2-deoxy-L-scyllo-inosose + L-glutamine = 2-deoxy-scyllo-inosamine + 2-oxoglutaramate. It catalyses the reaction 3-amino-2,3-dideoxy-scyllo-inosose + L-glutamine = 2-deoxystreptamine + 2-oxoglutaramate. Its pathway is metabolic intermediate biosynthesis; 2-deoxystreptamine biosynthesis; 2-deoxystreptamine from D-glucose 6-phosphate: step 2/4. It functions in the pathway antibiotic biosynthesis; tobramycin biosynthesis. Its function is as follows. Catalyzes the PLP-dependent transamination of 2-deoxy-scyllo-inosose (2-DOI) to form 2-deoxy-scyllo-inosamine (2-DOIA) using L-glutamine as the amino donor. Also catalyzes the transamination of 3-amino-2,3-dideoxy-scyllo-inosose (keto-2-DOIA) into 2-deoxystreptamine (2-DOS). This is L-glutamine:2-deoxy-scyllo-inosose aminotransferase (tbmB) from Streptoalloteichus tenebrarius (strain ATCC 17920 / DSM 40477 / JCM 4838 / CBS 697.72 / NBRC 16177 / NCIMB 11028 / NRRL B-12390 / A12253. 1 / ISP 5477) (Streptomyces tenebrarius).